The following is a 70-amino-acid chain: DNA-directed RNA polymerase subunit epsilon (70 aa).

Belongs to the RNA polymerase subunit epsilon family. In terms of assembly, RNAP is composed of a core of 2 alpha, a beta and a beta' subunit. The core is associated with a delta subunit, and at least one of epsilon or omega. When a sigma factor is associated with the core the holoenzyme is formed, which can initiate transcription.

It carries out the reaction RNA(n) + a ribonucleoside 5'-triphosphate = RNA(n+1) + diphosphate. A non-essential component of RNA polymerase (RNAP). The polypeptide is DNA-directed RNA polymerase subunit epsilon (Enterococcus faecalis (strain ATCC 700802 / V583)).